The chain runs to 346 residues: MIELKNVSKVFTTKKGNVEALKSTSLQVKKGEVFGIIGYSGAGKSTLIRCVNLLEKPTTGNIIVNSQDLTTLSAKELAKARQKIGMIFQGFNLLKTVTVYENIALPLRLAGISKVEIEKRVEKYLRIVDLFTRKDAYPSELSGGQKQRVAIARALSHEPEVLLSDEATSALDPETTDSILDLLLKINEEIGITILLITHEMNVIQRICDRVAVMEHGAVVESGTVKDIFTNPQHVTTKKFVNSAFAAKIPEDVQKELQTTGEIVTLSFIGNSSGEPALAVATKRFQVYPNILSGNITQLKHEAYGKLIIHMQGEQNEINRALSFLQEQGIIVEGGRTDHGKQVLFG.

The ABC transporter domain occupies 2 to 241; it reads IELKNVSKVF…PQHVTTKKFV (240 aa). 38-45 serves as a coordination point for ATP; the sequence is GYSGAGKS.

This sequence belongs to the ABC transporter superfamily. Methionine importer (TC 3.A.1.24) family. The complex is composed of two ATP-binding proteins (MetN), two transmembrane proteins (MetI) and a solute-binding protein (MetQ).

It localises to the cell membrane. It carries out the reaction L-methionine(out) + ATP + H2O = L-methionine(in) + ADP + phosphate + H(+). It catalyses the reaction D-methionine(out) + ATP + H2O = D-methionine(in) + ADP + phosphate + H(+). In terms of biological role, part of the ABC transporter complex MetNIQ involved in methionine import. Responsible for energy coupling to the transport system. The sequence is that of Methionine import ATP-binding protein MetN 1 from Bacillus cereus (strain ATCC 10987 / NRS 248).